The following is a 603-amino-acid chain: Nuclear receptor subfamily 2 group C member 1 (603 aa).

The required for interaction with KAT2B stretch occupies residues 1 to 178; it reads MATIEEIAHQ…RLQRCIAFGM (178 aa). The nuclear receptor DNA-binding region spans 110-185; it reads FDLCVVCGDK…FGMKQDSVQC (76 aa). NR C4-type zinc fingers lie at residues 113–133 and 149–168; these read CVVC…CEGC and CRGS…CQYC. 2 positions are modified to phosphoserine: Ser-197 and Ser-215. Phosphothreonine is present on Thr-220. Thr-222 carries the post-translational modification Phosphothreonine; by MAPK1. Lys-250 participates in a covalent cross-link: Glycyl lysine isopeptide (Lys-Gly) (interchain with G-Cter in SUMO); alternate. Lys-250 is covalently cross-linked (Glycyl lysine isopeptide (Lys-Gly) (interchain with G-Cter in SUMO2); alternate). Residues 348–590 enclose the NR LBD domain; sequence GSVHLITGDS…SVIPHILKME (243 aa). At Ser-581 the chain carries Phosphoserine; by PKC. Positions 584–603 are required for interaction with NRIP1; that stretch reads PHILKMEPADYNSQIIGHSI. Lys-588 participates in a covalent cross-link: Glycyl lysine isopeptide (Lys-Gly) (interchain with G-Cter in SUMO2).

It belongs to the nuclear hormone receptor family. NR2 subfamily. As to quaternary structure, homodimer. Heterodimer; binds DNA as a heterodimer with NR2C2 required for chromatin remodeling and for binding to promoter regions such as globin DR1 repeats. Interacts with ESR1; the interaction prevents homodimerization of ESR1 and suppresses its transcriptional activity and cell growth. Interacts with NRIP1 (via its LXXLL motifs); the interaction provides corepressor activity. Interacts with HDAC3 (via the DNA-binding domain). Interacts with HDAC4 (via the DNA-binding domain). Interacts with PIAS1; the interaction is required for sumoylation of NR2C1. Interacts with UBE2I; the interaction is required for sumoylation of NR2C1. Interacts with KAT2B; the interaction acts as a corepressor of gene expression. Sumoylation requires both PIAS1 and UBE2I. Sumoylation appears to dissociate NR2C1 from the PML nuclear bodies. Enhances the interaction with NRIP1 but inhibits interaction with KAT2B. In proliferating cells, stimulation by all-trans retinoic acid, activation of MAPK1-mediated phosphorylation and recruitment to PML bodies with subsequent sumoylation, suppresses OCT4 expression. In terms of processing, phosphorylated on several serine and threonine residues. Phosphorylation on Thr-220, stimulated by all-trans retinoic acid (atRA) mediates PML location and sumoylation in proliferating cells which then modulates its association with effector molecules, KAT2B and NRIP1. Phosphorylation on Ser-581 by PKC is important for protein stability and function as activator of RARB.

It is found in the nucleus. Its subcellular location is the PML body. In terms of biological role, orphan nuclear receptor. Binds the IR7 element in the promoter of its own gene in an autoregulatory negative feedback mechanism. Primarily repressor of a broad range of genes. Binds to hormone response elements (HREs) consisting of two 5'-AGGTCA-3' half site direct repeat consensus sequences. Together with NR2C2, forms the core of the DRED (direct repeat erythroid-definitive) complex that represses embryonic and fetal globin transcription. Also activator of OCT4 gene expression. May be involved in stem cell proliferation and differentiation. Mediator of retinoic acid-regulated preadipocyte proliferation. The polypeptide is Nuclear receptor subfamily 2 group C member 1 (NR2C1) (Macaca fascicularis (Crab-eating macaque)).